The chain runs to 341 residues: GTPase Obg (341 aa).

The Obg domain occupies M1–L159. The tract at residues T128–R150 is disordered. The span at R129–G144 shows a compositional bias: polar residues. Residues A160–D334 enclose the OBG-type G domain. Residues G166–S173, F191–H195, D213–G216, N283–D286, and S315–I317 each bind GTP. Mg(2+) contacts are provided by S173 and T193.

The protein belongs to the TRAFAC class OBG-HflX-like GTPase superfamily. OBG GTPase family. As to quaternary structure, monomer. Mg(2+) serves as cofactor.

It is found in the cytoplasm. Functionally, an essential GTPase which binds GTP, GDP and possibly (p)ppGpp with moderate affinity, with high nucleotide exchange rates and a fairly low GTP hydrolysis rate. Plays a role in control of the cell cycle, stress response, ribosome biogenesis and in those bacteria that undergo differentiation, in morphogenesis control. This is GTPase Obg from Legionella pneumophila subsp. pneumophila (strain Philadelphia 1 / ATCC 33152 / DSM 7513).